The following is a 98-amino-acid chain: MMPINLNLIMAFSLALIGALVYRSHLMSTLLCLEGMMLSLFIQMALLISHFHMFSMSMAPLILLVFSACEAGLGLALLVKTSSNYGNDYVQNLNLLQC.

3 helical membrane-spanning segments follow: residues 1–21, 28–48, and 59–79; these read MMPI…GALV, STLL…ALLI, and APLI…ALLV.

This sequence belongs to the complex I subunit 4L family. In terms of assembly, core subunit of respiratory chain NADH dehydrogenase (Complex I) which is composed of 45 different subunits.

Its subcellular location is the mitochondrion inner membrane. The catalysed reaction is a ubiquinone + NADH + 5 H(+)(in) = a ubiquinol + NAD(+) + 4 H(+)(out). Functionally, core subunit of the mitochondrial membrane respiratory chain NADH dehydrogenase (Complex I) which catalyzes electron transfer from NADH through the respiratory chain, using ubiquinone as an electron acceptor. Part of the enzyme membrane arm which is embedded in the lipid bilayer and involved in proton translocation. The polypeptide is NADH-ubiquinone oxidoreductase chain 4L (MT-ND4L) (Distoechurus pennatus (Feather-tailed possum)).